The primary structure comprises 255 residues: Ribonuclease HII (255 aa).

The 184-residue stretch at 72-255 folds into the RNase H type-2 domain; it reads RLIAGIDEVG…RTFAPIKDMI (184 aa). Residues Asp-78, Glu-79, and Asp-170 each contribute to the a divalent metal cation site.

Belongs to the RNase HII family. Mn(2+) is required as a cofactor. The cofactor is Mg(2+).

It is found in the cytoplasm. The enzyme catalyses Endonucleolytic cleavage to 5'-phosphomonoester.. Endonuclease that specifically degrades the RNA of RNA-DNA hybrids. This is Ribonuclease HII from Enterococcus faecalis (strain ATCC 700802 / V583).